We begin with the raw amino-acid sequence, 140 residues long: Zinc finger SWIM domain-containing protein 7 (140 aa).

Residues 66-114 form an SWIM-type zinc finger; it reads YQVLGSSSKTYTCLASCHYCSCPAFAFSVLRKSDSILCKHLLAVYLSQV.

It belongs to the SWS1 family. In terms of assembly, interacts with RAD51D and XRCC3; involved in homologous recombination repair. Interacts with SWSAP1; they form a functional complex involved in homologous recombination repair and stabilize each other. In terms of tissue distribution, expressed in ovary and testis.

It is found in the nucleus. Its function is as follows. Involved in early stages of the homologous recombination repair (HRR) pathway of double-stranded DNA breaks arising during DNA replication or induced by DNA-damaging agents. Required for meiotic progression, hence for fertility. The chain is Zinc finger SWIM domain-containing protein 7 (ZSWIM7) from Homo sapiens (Human).